A 750-amino-acid polypeptide reads, in one-letter code: Photosystem I P700 chlorophyll a apoprotein A1 (750 aa).

8 helical membrane passes run 70 to 93, 156 to 179, 195 to 219, 291 to 309, 346 to 369, 385 to 411, 433 to 455, and 531 to 549; these read VFSA…FHGA, LYCT…FHYH, LNHH…HVSL, IAHH…GHMY, WHAQ…HHMY, LSLF…IFMV, AIIS…LYIH, and FLVH…LILL. Positions 573 and 582 each coordinate [4Fe-4S] cluster. A run of 2 helical transmembrane segments spans residues 589–610 and 664–686; these read HVFL…HFSW and LSAY…MFLF. His-675 is a binding site for chlorophyll a'. Residues Met-683 and Tyr-691 each contribute to the chlorophyll a site. Position 692 (Trp-692) interacts with phylloquinone. A helical membrane pass occupies residues 724 to 744; that stretch reads AVGVTHYLLGGIATTWAFFLA.

The protein belongs to the PsaA/PsaB family. The PsaA/B heterodimer binds the P700 chlorophyll special pair and subsequent electron acceptors. PSI consists of a core antenna complex that captures photons, and an electron transfer chain that converts photonic excitation into a charge separation. The eukaryotic PSI reaction center is composed of at least 11 subunits. P700 is a chlorophyll a/chlorophyll a' dimer, A0 is one or more chlorophyll a, A1 is one or both phylloquinones and FX is a shared 4Fe-4S iron-sulfur center. serves as cofactor.

It is found in the plastid. The protein localises to the chloroplast thylakoid membrane. The enzyme catalyses reduced [plastocyanin] + hnu + oxidized [2Fe-2S]-[ferredoxin] = oxidized [plastocyanin] + reduced [2Fe-2S]-[ferredoxin]. PsaA and PsaB bind P700, the primary electron donor of photosystem I (PSI), as well as the electron acceptors A0, A1 and FX. PSI is a plastocyanin-ferredoxin oxidoreductase, converting photonic excitation into a charge separation, which transfers an electron from the donor P700 chlorophyll pair to the spectroscopically characterized acceptors A0, A1, FX, FA and FB in turn. Oxidized P700 is reduced on the lumenal side of the thylakoid membrane by plastocyanin. In Morus indica (Mulberry), this protein is Photosystem I P700 chlorophyll a apoprotein A1.